Reading from the N-terminus, the 627-residue chain is Chaperone protein DnaK (627 aa).

Residue Thr197 is modified to Phosphothreonine; by autocatalysis. Residues 598-611 are compositionally biased toward low complexity; the sequence is AYAKEQGGQQGAAD. Residues 598–627 are disordered; it reads AYAKEQGGQQGAADAGKKADDDDVIDAEVE. A compositionally biased stretch (acidic residues) spans 618–627; the sequence is DDDVIDAEVE.

Belongs to the heat shock protein 70 family.

In terms of biological role, acts as a chaperone. The chain is Chaperone protein DnaK from Sulfurovum sp. (strain NBC37-1).